Consider the following 156-residue polypeptide: Nuclear cap-binding protein subunit 2 (156 aa).

Ser2 carries the N-acetylserine modification. Phosphoserine occurs at positions 13 and 18. MRNA-binding positions include Tyr20, Tyr43, 112 to 116 (RTDWD), 123 to 127 (RQYGR), and 133 to 134 (QV). Residues 40–118 (CTLYVGNLSF…RIIRTDWDAG (79 aa)) form the RRM domain. The disordered stretch occupies residues 124–156 (QYGRGRSGGQVRDEYREDYDAGRGGYGKLAQKQ). A compositionally biased stretch (basic and acidic residues) spans 134-144 (VRDEYREDYDA). Omega-N-methylarginine is present on Arg146.

Belongs to the RRM NCBP2 family. As to quaternary structure, component of the nuclear cap-binding complex (CBC), a heterodimer composed of NCBP1/CBP80 and NCBP2/CBP20 that interacts with m7GpppG-capped RNA. Found in a U snRNA export complex with PHAX/RNUXA, NCBP1/CBP80, NCBP2/CBP20, RAN, XPO1 and m7G-capped RNA. Interacts with PHAX/RNUXA, EIF4G1, HNRNPF, HNRNPH1 and ALYREF/THOC4/ALY. Interacts with SRRT/ARS2 and KPNA3.

The protein localises to the nucleus. Its subcellular location is the cytoplasm. Functionally, component of the cap-binding complex (CBC), which binds co-transcriptionally to the 5' cap of pre-mRNAs and is involved in various processes such as pre-mRNA splicing, translation regulation, nonsense-mediated mRNA decay, RNA-mediated gene silencing (RNAi) by microRNAs (miRNAs) and mRNA export. The CBC complex is involved in mRNA export from the nucleus via its interaction with ALYREF/THOC4/ALY, leading to the recruitment of the mRNA export machinery to the 5' end of mRNA and to mRNA export in a 5' to 3' direction through the nuclear pore. The CBC complex is also involved in mediating U snRNA and intronless mRNAs export from the nucleus. The CBC complex is essential for a pioneer round of mRNA translation, before steady state translation when the CBC complex is replaced by cytoplasmic cap-binding protein eIF4E. The pioneer round of mRNA translation mediated by the CBC complex plays a central role in nonsense-mediated mRNA decay (NMD), NMD only taking place in mRNAs bound to the CBC complex, but not on eIF4E-bound mRNAs. The CBC complex enhances NMD in mRNAs containing at least one exon-junction complex (EJC) via its interaction with UPF1, promoting the interaction between UPF1 and UPF2. The CBC complex is also involved in 'failsafe' NMD, which is independent of the EJC complex, while it does not participate in Staufen-mediated mRNA decay (SMD). During cell proliferation, the CBC complex is also involved in microRNAs (miRNAs) biogenesis via its interaction with SRRT/ARS2, thereby being required for miRNA-mediated RNA interference. The CBC complex also acts as a negative regulator of PARN, thereby acting as an inhibitor of mRNA deadenylation. In the CBC complex, NCBP2/CBP20 recognizes and binds capped RNAs (m7GpppG-capped RNA) but requires NCBP1/CBP80 to stabilize the movement of its N-terminal loop and lock the CBC into a high affinity cap-binding state with the cap structure. The conventional cap-binding complex with NCBP2 binds both small nuclear RNA (snRNA) and messenger (mRNA) and is involved in their export from the nucleus. The sequence is that of Nuclear cap-binding protein subunit 2 (Ncbp2) from Mus musculus (Mouse).